The following is a 584-amino-acid chain: Aspartate--tRNA ligase (584 aa).

Residue Glu-169 coordinates L-aspartate. The tract at residues 193–196 (QLFK) is aspartate. An L-aspartate-binding site is contributed by Arg-215. ATP is bound by residues 215-217 (RDE) and Gln-224. His-446 is a binding site for L-aspartate. Glu-480 contacts ATP. Residue Arg-487 participates in L-aspartate binding. 532–535 (GLDR) serves as a coordination point for ATP.

Belongs to the class-II aminoacyl-tRNA synthetase family. Type 1 subfamily. Homodimer.

It is found in the cytoplasm. The catalysed reaction is tRNA(Asp) + L-aspartate + ATP = L-aspartyl-tRNA(Asp) + AMP + diphosphate. Catalyzes the attachment of L-aspartate to tRNA(Asp) in a two-step reaction: L-aspartate is first activated by ATP to form Asp-AMP and then transferred to the acceptor end of tRNA(Asp). The chain is Aspartate--tRNA ligase from Buchnera aphidicola subsp. Schizaphis graminum (strain Sg).